The sequence spans 522 residues: Maturase K (522 aa).

It belongs to the intron maturase 2 family. MatK subfamily.

Its subcellular location is the plastid. It localises to the chloroplast. In terms of biological role, usually encoded in the trnK tRNA gene intron. Probably assists in splicing its own and other chloroplast group II introns. This is Maturase K from Dianella ensifolia (Flax lily).